A 180-amino-acid polypeptide reads, in one-letter code: Progesterone receptor (180 aa).

Residues 1–11 form an NR C4-type zinc finger; the sequence is KNCPACRLRKC. A DNA-binding region (nuclear receptor) is located at residues 1–16; that stretch reads KNCPACRLRKCCQAGM. Position 60 is a phosphoserine (S60). An NR LBD domain is found at 63–180; the sequence is QEIQLFPPLI…QRMKESSFYS (118 aa). An AF2; mediates transcriptional activation region spans residues 71-180; sequence LINLLLSIEP…QRMKESSFYS (110 aa). Progesterone is bound at residue R150.

Belongs to the nuclear hormone receptor family. NR3 subfamily. In terms of assembly, interacts with SMARD1 and UNC45A. Interacts with CUEDC2; the interaction promotes ubiquitination, decreases sumoylation, and represses transcriptional activity. Interacts with PIAS3; the interaction promotes sumoylation of PR in a hormone-dependent manner, inhibits DNA-binding, and alters nuclear export. Interacts with SP1; the interaction requires ligand-induced phosphorylation by ERK1/2-MAPK. Interacts with PRMT2. Interacts with NCOA2 and NCOA1. Interacts with KLF9. Interacts with GTF2B. In terms of processing, phosphorylated on multiple serine sites. Several of these sites are hormone-dependent. Sumoylation is hormone-dependent and represses transcriptional activity. Sumoylation on all three sites is enhanced by PIAS3. Desumoylated by SENP1. Sumoylation is repressed by ubiquitination and modulated by phosphorylation. Post-translationally, ubiquitination is hormone-dependent and represses sumoylation. In terms of processing, palmitoylated by ZDHHC7 and ZDHHC21. Palmitoylation is required for plasma membrane targeting and for rapid intracellular signaling via ERK and AKT kinases and cAMP generation.

Its subcellular location is the nucleus. The protein localises to the cytoplasm. The steroid hormones and their receptors are involved in the regulation of eukaryotic gene expression and affect cellular proliferation and differentiation in target tissues. Transcriptional activator of several progesteron-dependent promoters in a variety of cell types. Involved in activation of SRC-dependent MAPK signaling on hormone stimulation. In Notamacropus eugenii (Tammar wallaby), this protein is Progesterone receptor (PGR).